The following is a 461-amino-acid chain: Bifunctional protein GlmU (461 aa).

Residues 1 to 230 form a pyrophosphorylase region; the sequence is MSKIHAVVLA…PEETLGVNDR (230 aa). Residues 9 to 12, Lys-23, Gln-73, 78 to 79, 101 to 103, Gly-140, Glu-155, Asn-170, and Asn-228 each bind UDP-N-acetyl-alpha-D-glucosamine; these read LAAG, GT, and YGD. Asp-103 provides a ligand contact to Mg(2+). Position 228 (Asn-228) interacts with Mg(2+). The tract at residues 231 to 251 is linker; the sequence is VQLSEAEAYMKKRIMTGHMRN. The N-acetyltransferase stretch occupies residues 252-461; that stretch reads GVTIIDPTST…KMPRKGKKQS (210 aa). Residues Arg-333 and Lys-351 each contribute to the UDP-N-acetyl-alpha-D-glucosamine site. The active-site Proton acceptor is His-363. 2 residues coordinate UDP-N-acetyl-alpha-D-glucosamine: Tyr-366 and Asn-377. Acetyl-CoA is bound by residues 386 to 387, Ala-423, and Arg-440; that span reads NY.

This sequence in the N-terminal section; belongs to the N-acetylglucosamine-1-phosphate uridyltransferase family. It in the C-terminal section; belongs to the transferase hexapeptide repeat family. In terms of assembly, homotrimer. Requires Mg(2+) as cofactor.

It is found in the cytoplasm. The enzyme catalyses alpha-D-glucosamine 1-phosphate + acetyl-CoA = N-acetyl-alpha-D-glucosamine 1-phosphate + CoA + H(+). The catalysed reaction is N-acetyl-alpha-D-glucosamine 1-phosphate + UTP + H(+) = UDP-N-acetyl-alpha-D-glucosamine + diphosphate. It participates in nucleotide-sugar biosynthesis; UDP-N-acetyl-alpha-D-glucosamine biosynthesis; N-acetyl-alpha-D-glucosamine 1-phosphate from alpha-D-glucosamine 6-phosphate (route II): step 2/2. Its pathway is nucleotide-sugar biosynthesis; UDP-N-acetyl-alpha-D-glucosamine biosynthesis; UDP-N-acetyl-alpha-D-glucosamine from N-acetyl-alpha-D-glucosamine 1-phosphate: step 1/1. It functions in the pathway bacterial outer membrane biogenesis; LPS lipid A biosynthesis. Its function is as follows. Catalyzes the last two sequential reactions in the de novo biosynthetic pathway for UDP-N-acetylglucosamine (UDP-GlcNAc). The C-terminal domain catalyzes the transfer of acetyl group from acetyl coenzyme A to glucosamine-1-phosphate (GlcN-1-P) to produce N-acetylglucosamine-1-phosphate (GlcNAc-1-P), which is converted into UDP-GlcNAc by the transfer of uridine 5-monophosphate (from uridine 5-triphosphate), a reaction catalyzed by the N-terminal domain. The sequence is that of Bifunctional protein GlmU from Brevibacillus brevis (strain 47 / JCM 6285 / NBRC 100599).